A 91-amino-acid chain; its full sequence is Small ribosomal subunit protein bS18 (91 aa).

This sequence belongs to the bacterial ribosomal protein bS18 family. In terms of assembly, part of the 30S ribosomal subunit. Forms a tight heterodimer with protein bS6.

Functionally, binds as a heterodimer with protein bS6 to the central domain of the 16S rRNA, where it helps stabilize the platform of the 30S subunit. This is Small ribosomal subunit protein bS18 from Gluconacetobacter diazotrophicus (strain ATCC 49037 / DSM 5601 / CCUG 37298 / CIP 103539 / LMG 7603 / PAl5).